The sequence spans 240 residues: MATVMEFKATARPKSGKGAARAERRAGRVPGVIYGDNKPPLPISVEDKDLRLRIQAGRFLTTIFDVVLDGQKHRVIPRDYHLDPVKDFPVHVDFLRLGEGATIRISVPLHLKGLESAPGVKRGGTFNIVTHTVDLEAPADAIPQFIEADVSTLDIGVSLHLSDIALPKGVKSVSREDVTLVTIVPPSGFNEEAAAPGAAPAAAAAAPAAKAGAAKAPAAAAPAAKAGAAKAPAAPAAKKK.

A disordered region spans residues 1–24; it reads MATVMEFKATARPKSGKGAARAER.

It belongs to the bacterial ribosomal protein bL25 family. CTC subfamily. As to quaternary structure, part of the 50S ribosomal subunit; part of the 5S rRNA/L5/L18/L25 subcomplex. Contacts the 5S rRNA. Binds to the 5S rRNA independently of L5 and L18.

Its function is as follows. This is one of the proteins that binds to the 5S RNA in the ribosome where it forms part of the central protuberance. The protein is Large ribosomal subunit protein bL25 of Rhodopseudomonas palustris (strain HaA2).